The chain runs to 309 residues: Ornithine carbamoyltransferase (309 aa).

Carbamoyl phosphate-binding positions include 56-59 (STRT), glutamine 83, arginine 107, and 134-137 (HPCQ). L-ornithine contacts are provided by residues asparagine 165, aspartate 223, and 227 to 228 (SM). Carbamoyl phosphate-binding positions include 263–264 (CL) and arginine 291.

The protein belongs to the aspartate/ornithine carbamoyltransferase superfamily. OTCase family.

It is found in the cytoplasm. The catalysed reaction is carbamoyl phosphate + L-ornithine = L-citrulline + phosphate + H(+). It participates in amino-acid biosynthesis; L-arginine biosynthesis; L-arginine from L-ornithine and carbamoyl phosphate: step 1/3. Reversibly catalyzes the transfer of the carbamoyl group from carbamoyl phosphate (CP) to the N(epsilon) atom of ornithine (ORN) to produce L-citrulline. The chain is Ornithine carbamoyltransferase from Burkholderia cenocepacia (strain HI2424).